A 557-amino-acid polypeptide reads, in one-letter code: MRSDMIKKGFDKAPHRSLLKATGLKDEDFDKPFIAICNSFIEIIPGHKHLNEFGKLVKEAVRAAGMVPFEFNTIGVDDGIAMGHIGMRYSLPSREIIADSVETVVNAHWFDGMICIPNCDKITPGMMMAALRINIPTVFVSGGPMAAGKTSKGDVVDLSSVFEGVGAYQSGKISEEELKDIEDHGCPSCGSCSGMFTANSMNCLCEVLGLALPGNGSILAIDPRREELIKQAAEKLKILIERDIKPRDIVTEEAIDDAFALDMAMGGSTNTVLHTLALAQEAGLDYDMNRIDAVSRRVPHLCKVSPASNWHMEDIDRAGGISAILKEMSRKEGVLHLDRITATGQTLRENIAHAEIKDKEVIHSLENPHSEEGGLRILKGNLAKDGAVIKSGATEVKRFEGPCVIFNSQDEALAGIMLGKVKKGDVVIIRYEGPRGGPGMPEMLAPTSAIAGMGLGADVALLTDGRFSGASRGISVGHISPEAAAGGTIALLEQGDIVCIDVEERLLEVRVSDEELDKRKKEWKRPEPKVKTGWLGRYAQMVTSANTGAVLKIPNFD.

Aspartate 78 contributes to the Mg(2+) binding site. Cysteine 119 is a [2Fe-2S] cluster binding site. Positions 120 and 121 each coordinate Mg(2+). Residue lysine 121 is modified to N6-carboxylysine. Cysteine 192 lines the [2Fe-2S] cluster pocket. Glutamate 442 contacts Mg(2+). Catalysis depends on serine 468, which acts as the Proton acceptor.

Belongs to the IlvD/Edd family. In terms of assembly, homodimer. The cofactor is [2Fe-2S] cluster. Mg(2+) serves as cofactor.

It carries out the reaction (2R)-2,3-dihydroxy-3-methylbutanoate = 3-methyl-2-oxobutanoate + H2O. It catalyses the reaction (2R,3R)-2,3-dihydroxy-3-methylpentanoate = (S)-3-methyl-2-oxopentanoate + H2O. It functions in the pathway amino-acid biosynthesis; L-isoleucine biosynthesis; L-isoleucine from 2-oxobutanoate: step 3/4. The protein operates within amino-acid biosynthesis; L-valine biosynthesis; L-valine from pyruvate: step 3/4. Its function is as follows. Functions in the biosynthesis of branched-chain amino acids. Catalyzes the dehydration of (2R,3R)-2,3-dihydroxy-3-methylpentanoate (2,3-dihydroxy-3-methylvalerate) into 2-oxo-3-methylpentanoate (2-oxo-3-methylvalerate) and of (2R)-2,3-dihydroxy-3-methylbutanoate (2,3-dihydroxyisovalerate) into 2-oxo-3-methylbutanoate (2-oxoisovalerate), the penultimate precursor to L-isoleucine and L-valine, respectively. The sequence is that of Dihydroxy-acid dehydratase from Bacillus thuringiensis subsp. konkukian (strain 97-27).